Here is a 485-residue protein sequence, read N- to C-terminus: Glutamate--tRNA ligase (485 aa).

Positions 12 to 22 (PSPTGYMHIGN) match the 'HIGH' region motif. The 'KMSKS' region signature appears at 253–257 (KLSKR). K256 contacts ATP.

It belongs to the class-I aminoacyl-tRNA synthetase family. Glutamate--tRNA ligase type 1 subfamily. As to quaternary structure, monomer.

The protein localises to the cytoplasm. The enzyme catalyses tRNA(Glu) + L-glutamate + ATP = L-glutamyl-tRNA(Glu) + AMP + diphosphate. Functionally, catalyzes the attachment of glutamate to tRNA(Glu) in a two-step reaction: glutamate is first activated by ATP to form Glu-AMP and then transferred to the acceptor end of tRNA(Glu). The protein is Glutamate--tRNA ligase of Clostridium acetobutylicum (strain ATCC 824 / DSM 792 / JCM 1419 / IAM 19013 / LMG 5710 / NBRC 13948 / NRRL B-527 / VKM B-1787 / 2291 / W).